Consider the following 279-residue polypeptide: Pantothenate synthetase (279 aa).

26-33 is a binding site for ATP; the sequence is MGNLHDGH. Residue His33 is the Proton donor of the active site. Gln57 contributes to the (R)-pantoate binding site. Residue Gln57 participates in beta-alanine binding. 144–147 lines the ATP pocket; it reads GKKD. Gln150 serves as a coordination point for (R)-pantoate. An ATP-binding site is contributed by 181–184; sequence LSSR.

It belongs to the pantothenate synthetase family. As to quaternary structure, homodimer.

Its subcellular location is the cytoplasm. The catalysed reaction is (R)-pantoate + beta-alanine + ATP = (R)-pantothenate + AMP + diphosphate + H(+). It functions in the pathway cofactor biosynthesis; (R)-pantothenate biosynthesis; (R)-pantothenate from (R)-pantoate and beta-alanine: step 1/1. Catalyzes the condensation of pantoate with beta-alanine in an ATP-dependent reaction via a pantoyl-adenylate intermediate. In Janthinobacterium sp. (strain Marseille) (Minibacterium massiliensis), this protein is Pantothenate synthetase.